The primary structure comprises 507 residues: MITVKGPVDHVVVVGAGLAGLAAALHLLGAGRRVTVVEREDVPGGRAGLLESGGFRIDTGPTVLTMPDLVEDAFAAVGERMADRLELIRLAPAYRARFADGSQLDVHTDGAAMEAAVEEFAGARQAVGYRRLRIWLERLYRVQMRRFIDTNFDSPLQLAHPDLARLAALGGFGRLDARIGHFVSDERLRRVFSFQALYAGVPPARALAAYAVIAYMDTVAGVYFPRGGMHALPRAMADAASDAGAVLRYGQRVTRLERSGDRVTAVVTDQEHIPCDAVVLTPDLPVSYRLLGRTPHRPLPLRHSPSAVILHTGTDRTWPDLAHHTISFGAAWKNTFHELTRTGRLMSDPSLLITRPTATDPSLAPPGKHLHYVLAPCPNTEVGPGVREWRELGPRYRDELLAELERREMPGLGAAIEEEGLVTPVDWTAQGHAAGTPFSVAHTFPQTGPFRPRNLVRGTVNAVLAGCGTTPGVGVPTVLISGKLAAERITGPRIARAPRSAPGGSSA.

12–45 (VVVGAGLAGLAAALHLLGAGRRVTVVEREDVPGG) lines the FAD pocket.

Belongs to the carotenoid/retinoid oxidoreductase family. FAD is required as a cofactor.

Its pathway is carotenoid biosynthesis; lycopene biosynthesis. Its function is as follows. This enzyme converts phytoene into zeta-carotene via the intermediary of phytofluene by the symmetrical introduction of two double bonds at the C-11 and C-11' positions of phytoene. This chain is Phytoene dehydrogenase (crtI), found in Streptomyces griseus.